The sequence spans 558 residues: Nucleoprotein (558 aa).

The tract at residues 54–237 (MRKEKRDDKD…ITEQQSSINI (184 aa)) is binding site for the cap structure m7GTP. Residues Asp-382 and Glu-384 each contribute to the Mg(2+) site. Asp-382 and Glu-384 together coordinate Mn(2+). Zn(2+) is bound by residues Glu-392, Cys-499, His-502, and Cys-518. Asp-522 is a Mg(2+) binding site. Asp-522 serves as a coordination point for Mn(2+).

It belongs to the arenaviridae nucleocapsid protein family. In terms of assembly, homomultimerizes to form the nucleocapsid. Binds to viral genomic RNA. Interacts with glycoprotein G2. Interacts with protein Z; this interaction probably directs the encapsidated genome to budding sites. Interacts with protein L; this interaction does not interfere with Z-L interaction. Interacts with host IKBKE (via Protein kinase domain); the interaction inhibits IKBKE kinase activity.

Its subcellular location is the virion. It is found in the host cytoplasm. In terms of biological role, encapsidates the genome, protecting it from nucleases. The encapsidated genomic RNA is termed the nucleocapsid (NC). Serves as template for viral transcription and replication. The increased presence of protein N in host cell does not seem to trigger the switch from transcription to replication as observed in other negative strain RNA viruses. Through the interaction with host IKBKE, strongly inhibits the phosphorylation and nuclear translocation of host IRF3, a protein involved in interferon activation pathway, leading to the inhibition of interferon-beta and IRF3-dependent promoters activation. Also encodes a functional 3'-5' exoribonuclease that degrades preferentially dsRNA substrates and thereby participates in the suppression of interferon induction. This Lymphocytic choriomeningitis virus (strain Armstrong) (LCMV) protein is Nucleoprotein.